Reading from the N-terminus, the 284-residue chain is SF-assemblin (284 aa).

Residues 1-30 form a disordered region; that stretch reads PTPSPEARVASRPFLDSPLPGSPRSGSPTG. Residues 1-38 are nonhelical region; the sequence is PTPSPEARVASRPFLDSPLPGSPRSGSPTGYITATKAI. Residues 17-30 show a composition bias toward low complexity; that stretch reads SPLPGSPRSGSPTG. The tract at residues 39-284 is rod; the sequence is SAGKLEHVAE…QDGLRIVNNS (246 aa). 2 coiled-coil regions span residues 56-102 and 239-268; these read EIEL…QIQV and LDEINNLKSAVQMEREERISEDDEIVQAVN.

This sequence belongs to the SF-assemblin family. Post-translationally, consists of at least four isoforms including two phosphorylated.

The protein resides in the cytoplasm. Its subcellular location is the cytoskeleton. Functionally, major component of the striated microtubule-associated fibers (SMAFs; system-I-fibers). This chain is SF-assemblin, found in Spermatozopsis similis (Green alga).